The following is a 344-amino-acid chain: Protein pelota homolog (344 aa).

The protein belongs to the eukaryotic release factor 1 family. Pelota subfamily. Monomer. Requires a divalent metal cation as cofactor.

It is found in the cytoplasm. Functionally, may function in recognizing stalled ribosomes, interact with stem-loop structures in stalled mRNA molecules, and effect endonucleolytic cleavage of the mRNA. May play a role in the release non-functional ribosomes and degradation of damaged mRNAs. Has endoribonuclease activity. This is Protein pelota homolog from Saccharolobus islandicus (strain M.14.25 / Kamchatka #1) (Sulfolobus islandicus).